The sequence spans 1959 residues: MEFPIGSVGTTNFRRFTPESLAEIEKQIAAHGAAKKARAKHGERKGQDEKPRPQLDLKACNQLPRFYGELPAELVGEPLEDLDPFYSTHRTFMVLNKGRTISRFSATWALWLFSPFNLIRRTAIKVSVHAWFSIFITITILFNCVCMTQNDLPEKIEYAFTVIYTFEALIKILARGFCLNEFTYLRDPWNWLDFSVITLAYVGAAIDLRGISGLRTFRVLRALKTVSVIPGLKVIVGALIHSVRKLADVTILTVFCLSVFALVGLQLFKGNLKNKCIKRSTDPHNAYNFSSQMADNFYIKNGTTEPLLCGNGSDAGHCPSGYICLKTSDNPDFNYTSFDSFAWAFLSLFRLMTQDSWERLYQQTLRASGKMYMVFFVLVIFLGSFYLVNLILAVVTMAYEEQNQATIAEIEAKEKKFQEALEVLQKEQEVLAALGIDTTSLHSHNGSPLAPKNANERKHRIKSRVSEGSTDDNRSPQSDPYNQRRMSFLGLSSGRRRASHSSVFHFRAPSQDVSFPDGITDDGVFHGDHESHRSSLLLARGAGQAGPLPRSPLASSPNPGPGHREEGQLTAPTGELTTGAPEDLALEAAGQKKNFLSAEYLNEPFRAQRAMSVVSIMTSVIEELEESKLRCPPCLINLAQKYLIWECCPKWMKFKMVLFELVTDPFAELTITLCIVVNTIFMAMEHYPMTDAFDAMLQAGNIVFTVFFTMEMAFKIIAFDPYYYFQKKWNVFDCVIVTVSLLELSIAKKGSLSVLRTFRLLRVFKLAKSWPTLNTLIKIIGNSVGALGNLTFILAIIVFIFALVGKQLLGEDYGCRKDGTALWNEGQLRWHMCDFFHSFLVIFRILCGEWIENMWVCMQVSEKSICLILFLTVMVLGNLVVLNLFIALLLNSFSADNLTAPEDDGEVNNLQVALARTQAFGQRASQAISSYFSSHCRLRWPKVGSQLGVKPSLTSSKAEHHITADAVNTAVGTSAKPALSGPKEDPRDFITDANVWVSVPIAEGESDLDELEEDIEQNSQSSWREESPKGQQDQLWQIQRCEDHQVPNSPGSGMSSEDLASYLGERWKSEATPQVPAEGVDDTSSSEGSTVDCPDPEEILKKIPELADDLEEPDDCFTEGCTRHCPCCKVSTSKFPWTTGWQVRKTCYRIVEHSWFESFIIFMILLSSGALAFEDNYLEQKPRVKSMLEYTDRVFTFIFVFEMLLKWVAYGFKKYFTNAWCWLDFLIVNISLTSLIAKILDYSDVASLKALRTLRALRPLRALSRFEGMRVVVDALVGAIPSIMNVLLVCLIFWLIFSIMGVNLFAGKFSRCIDTSNNPFSVVNSTIVNNKSECRNQNHTGHFFWVNVKVNFDNVAMGYLALLQVATFKGWMDIMYAAVDSREINSQPQWEDNLYMYLYFVVFIIFGGFFTLNLFVGVIIDNFNQQKKKLGGQDIFMTEEQKKYYNAMKKLGSKKPQKPIPRPLNKYQGFVFDIVTRQAFDIIIMVLICLNMITMMVETDGQSEEKTKILGRINQFFVAVFTGECVMKMFALRQYYFTNGWNVFDFIVVILSIGSLVFSAILKSLESYFSPTLFRVIRLARIGRILRLIRAAKGIRTLLFALMMSLPALFNIGLLLFLVMFIYSIFGMASFANVVEEAGIDDMFNFQTFGNSMLCLFQITTSAGWDGLLSPILNTGPPYCDPNLSNNNTSKGNCGSPTVGIVFFTTYIIISFLIVVNMYIAVILENFNVATEESTEPLSEDDFDMFYETWEKFDPEATQFIAFSALSDFADTLSGPLRIPKPNQNILIQMDLPLVPGDKIHCLDILFAFTKNVLGESGELDSLKTNMEEKFMATNLSKASYEPIATTLRWKQEDISATVIQKAYRSYVLQRSLTLSNPLRVPRAEDDDAPLPGEGYVTFMANDSGRLPDKSETTSATSFPPSYDSVTRGLSDRVNISTSNSMHNEDEVTSKEGDSPGPQ.

Residues 1–125 (MEFPIGSVGT…FNLIRRTAIK (125 aa)) lie on the Cytoplasmic side of the membrane. The disordered stretch occupies residues 30–53 (AHGAAKKARAKHGERKGQDEKPRP). Residues 33–43 (AAKKARAKHGE) show a composition bias toward basic residues. Basic and acidic residues predominate over residues 44–53 (RKGQDEKPRP). Residues 116 to 404 (FNLIRRTAIK…VTMAYEEQNQ (289 aa)) form an I repeat. A helical transmembrane segment spans residues 126-149 (VSVHAWFSIFITITILFNCVCMTQ). The Extracellular segment spans residues 150-154 (NDLPE). The helical transmembrane segment at 155-174 (KIEYAFTVIYTFEALIKILA) threads the bilayer. The Cytoplasmic portion of the chain corresponds to 175-187 (RGFCLNEFTYLRD). Residues 188–206 (PWNWLDFSVITLAYVGAAI) traverse the membrane as a helical segment. The Extracellular portion of the chain corresponds to 207–212 (DLRGIS). Residues 213-232 (GLRTFRVLRALKTVSVIPGL) traverse the membrane as a helical; Voltage-sensor segment. Residues 233–248 (KVIVGALIHSVRKLAD) lie on the Cytoplasmic side of the membrane. A helical membrane pass occupies residues 249–272 (VTILTVFCLSVFALVGLQLFKGNL). At 273–340 (KNKCIKRSTD…PDFNYTSFDS (68 aa)) the chain is on the extracellular side. A disulfide bridge connects residues C276 and C318. 3 N-linked (GlcNAc...) asparagine glycosylation sites follow: N288, N311, and N334. The segment at residues 341–365 (FAWAFLSLFRLMTQDSWERLYQQTL) is an intramembrane region (pore-forming). At 366 to 372 (RASGKMY) the chain is on the extracellular side. A helical transmembrane segment spans residues 373 to 398 (MVFFVLVIFLGSFYLVNLILAVVTMA). Residues 399 to 659 (YEEQNQATIA…KWMKFKMVLF (261 aa)) lie on the Cytoplasmic side of the membrane. 4 positions are modified to phosphoserine: S440, S443, S466, and S478. 2 disordered regions span residues 442 to 484 (HSHN…YNQR) and 510 to 578 (SQDV…ELTT). Residues 475 to 484 (SPQSDPYNQR) show a composition bias toward polar residues. Positions 523–533 (GVFHGDHESHR) are enriched in basic and acidic residues. 2 positions are modified to phosphoserine: S612 and S615. Residues 647–911 (CCPKWMKFKM…EDDGEVNNLQ (265 aa)) form an II repeat. A helical transmembrane segment spans residues 660–684 (ELVTDPFAELTITLCIVVNTIFMAM). Residues 685–695 (EHYPMTDAFDA) are Extracellular-facing. The helical transmembrane segment at 696-719 (MLQAGNIVFTVFFTMEMAFKIIAF) threads the bilayer. Residues 720–727 (DPYYYFQK) are Cytoplasmic-facing. A helical transmembrane segment spans residues 728-747 (KWNVFDCVIVTVSLLELSIA). Over 748-753 (KKGSLS) the chain is Extracellular. A helical; Voltage-sensor transmembrane segment spans residues 754-773 (VLRTFRLLRVFKLAKSWPTL). The Cytoplasmic segment spans residues 774–789 (NTLIKIIGNSVGALGN). The helical transmembrane segment at 790 to 810 (LTFILAIIVFIFALVGKQLLG) threads the bilayer. At 811-834 (EDYGCRKDGTALWNEGQLRWHMCD) the chain is on the extracellular side. Positions 835-855 (FFHSFLVIFRILCGEWIENMW) form an intramembrane region, pore-forming. The Extracellular segment spans residues 856–864 (VCMQVSEKS). A disulfide bridge links C857 with C866. The helical transmembrane segment at 865-890 (ICLILFLTVMVLGNLVVLNLFIALLL) threads the bilayer. Over 891-1149 (NSFSADNLTA…GWQVRKTCYR (259 aa)) the chain is Cytoplasmic. Residues 1004–1016 (GESDLDELEEDIE) show a composition bias toward acidic residues. Disordered stretches follow at residues 1004 to 1034 (GESD…QQDQ) and 1071 to 1097 (ATPQ…PDPE). One copy of the III repeat lies at 1142 to 1451 (QVRKTCYRIV…KKYYNAMKKL (310 aa)). The chain crosses the membrane as a helical span at residues 1150-1173 (IVEHSWFESFIIFMILLSSGALAF). Over 1174–1186 (EDNYLEQKPRVKS) the chain is Extracellular. Residues 1187 to 1212 (MLEYTDRVFTFIFVFEMLLKWVAYGF) traverse the membrane as a helical segment. Topologically, residues 1213–1218 (KKYFTN) are cytoplasmic. Residues 1219–1240 (AWCWLDFLIVNISLTSLIAKIL) traverse the membrane as a helical segment. Over 1241–1244 (DYSD) the chain is Extracellular. A helical; Voltage-sensor transmembrane segment spans residues 1245–1266 (VASLKALRTLRALRPLRALSRF). Over 1267–1285 (EGMRVVVDALVGAIPSIMN) the chain is Cytoplasmic. A helical transmembrane segment spans residues 1286–1313 (VLLVCLIFWLIFSIMGVNLFAGKFSRCI). Residues 1314–1355 (DTSNNPFSVVNSTIVNNKSECRNQNHTGHFFWVNVKVNFDNV) are Extracellular-facing. The segment at residues 1356–1377 (AMGYLALLQVATFKGWMDIMYA) is an intramembrane region (pore-forming). The Extracellular segment spans residues 1378-1393 (AVDSREINSQPQWEDN). The chain crosses the membrane as a helical span at residues 1394–1420 (LYMYLYFVVFIIFGGFFTLNLFVGVII). The Cytoplasmic portion of the chain corresponds to 1421–1473 (DNFNQQKKKLGGQDIFMTEEQKKYYNAMKKLGSKKPQKPIPRPLNKYQGFVFD). S1453 bears the Phosphoserine; by PKC mark. One copy of the IV repeat lies at 1460–1759 (IPRPLNKYQG…WEKFDPEATQ (300 aa)). The helical transmembrane segment at 1474–1497 (IVTRQAFDIIIMVLICLNMITMMV) threads the bilayer. Residues 1498–1508 (ETDGQSEEKTK) are Extracellular-facing. Residues 1509-1532 (ILGRINQFFVAVFTGECVMKMFAL) form a helical membrane-spanning segment. The Cytoplasmic segment spans residues 1533–1538 (RQYYFT). The chain crosses the membrane as a helical span at residues 1539–1562 (NGWNVFDFIVVILSIGSLVFSAIL). Residues 1563 to 1574 (KSLESYFSPTLF) lie on the Extracellular side of the membrane. A helical; Voltage-sensor transmembrane segment spans residues 1575 to 1596 (RVIRLARIGRILRLIRAAKGIR). Residues 1597 to 1611 (TLLFALMMSLPALFN) lie on the Cytoplasmic side of the membrane. Residues 1612-1634 (IGLLLFLVMFIYSIFGMASFANV) traverse the membrane as a helical segment. The Extracellular segment spans residues 1635 to 1648 (VEEAGIDDMFNFQT). The segment at residues 1649–1671 (FGNSMLCLFQITTSAGWDGLLSP) is an intramembrane region (pore-forming). Residues 1672-1699 (ILNTGPPYCDPNLSNNNTSKGNCGSPTV) lie on the Extracellular side of the membrane. Residues 1700-1724 (GIVFFTTYIIISFLIVVNMYIAVIL) form a helical membrane-spanning segment. At 1725-1959 (ENFNVATEES…SKEGDSPGPQ (235 aa)) the chain is on the cytoplasmic side. Positions 1853-1882 (EDISATVIQKAYRSYVLQRSLTLSNPLRVP) constitute an IQ domain. The segment at 1901 to 1959 (ANDSGRLPDKSETTSATSFPPSYDSVTRGLSDRVNISTSNSMHNEDEVTSKEGDSPGPQ) is disordered. The span at 1943-1959 (HNEDEVTSKEGDSPGPQ) shows a compositional bias: basic and acidic residues.

Belongs to the sodium channel (TC 1.A.1.10) family. Nav1.8/SCN10A subfamily. As to quaternary structure, the channel consists of an ion conducting pore forming alpha-subunit regulated by one or more associated auxiliary subunits SCN1B, SCN2B and SCN3B; electrophysiological properties may vary depending on the type of the associated beta subunits. Found in a number of complexes with PRX, DYNLT1 and PDZD2. Interacts with proteins such as FSTL1, PRX, DYNLT1, PDZD2, S100A10 and many others. Interacts with NEDD4 and NEDD4L. Post-translationally, ubiquitinated by NEDD4L; which promotes its endocytosis. In terms of processing, phosphorylation at Ser-1453 by PKC in a highly conserved cytoplasmic loop slows inactivation of the sodium channel and reduces peak sodium currents. Lacks the cysteine which covalently binds the conotoxin GVIIJ. This cysteine (position 816) is speculated in other sodium channel subunits alpha to be implied in covalent binding with the sodium channel subunit beta-2 or beta-4.

Its subcellular location is the cell membrane. It carries out the reaction Na(+)(in) = Na(+)(out). Its function is as follows. Tetrodotoxin-resistant channel that mediates the voltage-dependent sodium ion permeability of excitable membranes. Assuming opened or closed conformations in response to the voltage difference across the membrane, the protein forms a sodium-selective channel through which sodium ions may pass in accordance with their electrochemical gradient. Plays a role in neuropathic pain mechanisms. In Onychomys torridus (Southern grasshopper mouse), this protein is Sodium channel protein type 10 subunit alpha (Scn10a).